The following is a 102-amino-acid chain: MRRDQKMGEGNYPLAGHHLKQKNLLFGPLENIKTGAQIVITDFKKDYIYSVTSKDIISEMDADVVEETNKKEITLITCDKAVKTEGRLVVKGELVDSFGHTN.

The active-site Proton donor/acceptor is the His-17. The active-site Acyl-thioester intermediate is Cys-78.

It belongs to the bacterial sortase family.

In terms of biological role, seems not to play a major role if any as a sortase. This chain is Putative sortase YwpE (ywpE), found in Bacillus subtilis (strain 168).